Reading from the N-terminus, the 231-residue chain is ATP-dependent dethiobiotin synthetase BioD (231 aa).

An ATP-binding site is contributed by 12 to 17; it reads DVGKTV. Thr-16 is a Mg(2+) binding site. Lys-37 is a catalytic residue. Thr-41 is a substrate binding site. Residues Asp-50, 109–112, 170–171, and 200–202 contribute to the ATP site; these read EGAG, GS, and PAG. Residues Asp-50 and Glu-109 each coordinate Mg(2+).

It belongs to the dethiobiotin synthetase family. As to quaternary structure, homodimer. Requires Mg(2+) as cofactor.

The protein resides in the cytoplasm. It carries out the reaction (7R,8S)-7,8-diammoniononanoate + CO2 + ATP = (4R,5S)-dethiobiotin + ADP + phosphate + 3 H(+). The protein operates within cofactor biosynthesis; biotin biosynthesis; biotin from 7,8-diaminononanoate: step 1/2. In terms of biological role, catalyzes a mechanistically unusual reaction, the ATP-dependent insertion of CO2 between the N7 and N8 nitrogen atoms of 7,8-diaminopelargonic acid (DAPA, also called 7,8-diammoniononanoate) to form a ureido ring. This Rhodococcus jostii (strain RHA1) protein is ATP-dependent dethiobiotin synthetase BioD.